Consider the following 245-residue polypeptide: tRNA pseudouridine synthase A 2 (245 aa).

Aspartate 53 serves as the catalytic Nucleophile. Tyrosine 111 is a substrate binding site.

Belongs to the tRNA pseudouridine synthase TruA family. As to quaternary structure, homodimer.

The catalysed reaction is uridine(38/39/40) in tRNA = pseudouridine(38/39/40) in tRNA. Formation of pseudouridine at positions 38, 39 and 40 in the anticodon stem and loop of transfer RNAs. This chain is tRNA pseudouridine synthase A 2, found in Bacillus cereus (strain ATCC 14579 / DSM 31 / CCUG 7414 / JCM 2152 / NBRC 15305 / NCIMB 9373 / NCTC 2599 / NRRL B-3711).